The chain runs to 526 residues: Fluoride export protein 1 (526 aa).

2 disordered regions span residues 1-73 (MMTA…RRAS) and 90-149 (ASNI…KQAG). At 1-159 (MMTAPSDTEG…VVAKRQKVSR (159 aa)) the chain is on the cytoplasmic side. Basic and acidic residues-rich tracts occupy residues 21–36 (SPDR…DHNH) and 103–123 (PITR…YLRE). Residues 160 to 180 (LATELYTISYLIFFSLLGTLA) form a helical membrane-spanning segment. Residues 181–194 (RLGLQALTSAYPQS) are Extracellular-facing. Residues 195–215 (PIIFPSIWPNFAGCVVMGFLA) traverse the membrane as a helical segment. The Cytoplasmic portion of the chain corresponds to 216-260 (EDRMLFRPDWGQQQPNPKKDDDDDEEAKDIDPAAAKKAHMALKKT). A disordered region spans residues 223–242 (PDWGQQQPNPKKDDDDDEEA). Residues 261 to 281 (IPLYVGLATGFCGSFTSFSSF) traverse the membrane as a helical segment. Residues 282–310 (IRDIYLALSNDLAAHGSSAAPVSRNGGYS) are Extracellular-facing. Residues 311 to 331 (FMALLAVTITTISLSLSGLFA) traverse the membrane as a helical segment. At 332 to 361 (GAHLAIAIATLFTRFDLGLPYTFVSRILDR) the chain is on the cytoplasmic side. Residues 362 to 382 (LIVLLGFGCWLGAVLLSIWPP) traverse the membrane as a helical segment. The Extracellular segment spans residues 383–398 (DRHSAQPEKERWRGTA). The helical transmembrane segment at 399 to 419 (TFALVFAPLGCLTRFYASAHL) threads the bilayer. Residues 420-424 (NGRLP) are Cytoplasmic-facing. The chain crosses the membrane as a helical span at residues 425-445 (SFPLGTFVVNMLGTAVLGMAW). Topologically, residues 446–452 (DLNHVPS) are extracellular. The chain crosses the membrane as a helical span at residues 453–473 (LGGVVGCQVLQGVADGFCGCL). Residues 474-492 (TTVSTWVSELAALRRRHAY) lie on the Cytoplasmic side of the membrane. Residues 493-513 (VYGGASVGGGLALMVVVMGSL) traverse the membrane as a helical segment. The Extracellular segment spans residues 514–526 (RWTEGFGEVKCIS).

This sequence belongs to the fluoride channel Fluc/FEX (TC 1.A.43) family.

It is found in the cell membrane. The catalysed reaction is fluoride(in) = fluoride(out). Its function is as follows. Fluoride channel required for the rapid expulsion of cytoplasmic fluoride. This is Fluoride export protein 1 from Neurospora crassa (strain ATCC 24698 / 74-OR23-1A / CBS 708.71 / DSM 1257 / FGSC 987).